The sequence spans 31 residues: Cytochrome b6-f complex subunit 8 (31 aa).

Residues 5-25 (IVSMAWAALMVVFTFSLSLVI) form a helical membrane-spanning segment.

This sequence belongs to the PetN family. In terms of assembly, the 4 large subunits of the cytochrome b6-f complex are cytochrome b6, subunit IV (17 kDa polypeptide, PetD), cytochrome f and the Rieske protein, while the 4 small subunits are PetG, PetL, PetM and PetN. The complex functions as a dimer.

It localises to the plastid membrane. In terms of biological role, component of the cytochrome b6-f complex, which mediates electron transfer between photosystem II (PSII) and photosystem I (PSI), cyclic electron flow around PSI, and state transitions. The polypeptide is Cytochrome b6-f complex subunit 8 (Cuscuta gronovii (Common dodder)).